The following is a 160-amino-acid chain: SsrA-binding protein (160 aa).

It belongs to the SmpB family.

The protein localises to the cytoplasm. Its function is as follows. Required for rescue of stalled ribosomes mediated by trans-translation. Binds to transfer-messenger RNA (tmRNA), required for stable association of tmRNA with ribosomes. tmRNA and SmpB together mimic tRNA shape, replacing the anticodon stem-loop with SmpB. tmRNA is encoded by the ssrA gene; the 2 termini fold to resemble tRNA(Ala) and it encodes a 'tag peptide', a short internal open reading frame. During trans-translation Ala-aminoacylated tmRNA acts like a tRNA, entering the A-site of stalled ribosomes, displacing the stalled mRNA. The ribosome then switches to translate the ORF on the tmRNA; the nascent peptide is terminated with the 'tag peptide' encoded by the tmRNA and targeted for degradation. The ribosome is freed to recommence translation, which seems to be the essential function of trans-translation. The polypeptide is SsrA-binding protein (Salmonella agona (strain SL483)).